The sequence spans 80 residues: Small ribosomal subunit protein bS18c (80 aa).

Basic residues predominate over residues Met1–Pro19. A disordered region spans residues Met1 to Glu24.

It belongs to the bacterial ribosomal protein bS18 family. In terms of assembly, part of the 30S ribosomal subunit.

Its subcellular location is the plastid. It localises to the chloroplast. The polypeptide is Small ribosomal subunit protein bS18c (Staurastrum punctulatum (Green alga)).